A 626-amino-acid polypeptide reads, in one-letter code: Ankyrin repeat domain-containing protein 13B (626 aa).

Met1 is subject to N-acetylmethionine. ANK repeat units follow at residues 47-76 (RGRTPLHLATTLGHLECARVLLAHGADVGR) and 80-109 (SGWTVLQEAVSTRDLELVQLVLRYRDYQRV). A disordered region spans residues 442–470 (PVPSVRGSPGSETPSPGSDSSSVSSSSST). The segment covering 448 to 470 (GSPGSETPSPGSDSSSVSSSSST) has biased composition (low complexity). One can recognise a UIM 1 domain in the interval 503 to 522 (EDDDLLRFAIQQSLLEAGSE). Residues 534–614 (NSKPGTHPMS…RRRVRQEEEE (81 aa)) form a disordered region. Residues 554–575 (PPTPQRQPMPPAPVPSPRPSPG) are compositionally biased toward pro residues. UIM domains lie at 585 to 604 (SYDEQLRLAMELSAQEQEER) and 610 to 626 (QEEEELERILRLSLTEQ).

As to quaternary structure, interacts with EGFR (ubiquitinated); the interaction is direct and may regulate EGFR internalization.

It is found in the cell membrane. It localises to the late endosome. The protein resides in the early endosome. In terms of biological role, ubiquitin-binding protein that specifically recognizes and binds 'Lys-63'-linked ubiquitin. Does not bind 'Lys-48'-linked ubiquitin. Positively regulates the internalization of ligand-activated EGFR by binding to the Ub moiety of ubiquitinated EGFR at the cell membrane. The sequence is that of Ankyrin repeat domain-containing protein 13B (Ankrd13b) from Mus musculus (Mouse).